The sequence spans 558 residues: TNF receptor-associated factor 5 (558 aa).

An RING-type zinc finger spans residues 45 to 85 (CAFCHSVLHNPHQTGCGHRFCQQCIRSLRELNSVPICPVDK). TRAF-type zinc fingers lie at residues 127–181 (DHLQ…TNLQ) and 182–239 (DHEE…GNLL). A coiled-coil region spans residues 252 to 302 (LVLEKNYQLEQRISDLYQSLEQKESKIQQLAETVKKFEKELKQFTQMFGRN). Residue Lys-318 forms a Glycyl lysine isopeptide (Lys-Gly) (interchain with G-Cter in ubiquitin) linkage. Residues 340 to 400 (LDLRSLVDAV…EERFKQLEGA (61 aa)) adopt a coiled-coil conformation. The tract at residues 345-558 (LVDAVDSVKQ…AVDLTDLEDL (214 aa)) is interaction with EIF2AK2/PKR. An MATH domain is found at 403–550 (SGKLIWKVTD…DDTLFLKVAV (148 aa)).

The protein belongs to the TNF receptor-associated factor family. A subfamily. Homotrimer. Heterotrimer with TRAF3. Associates with TNFRSF5/CD40 through interaction with TRAF3. Associates with LTBR/TNFRSF3, TNFRSF4, TNFRSF8/CD30, TNFRSF11A/RANK, TNFRSF13B/TACI, TNFRSF14, TNFRSF17, TNFRSF19/TROY, RIPK2, MAP3K14, MAP3K5, and TRAF and TNF receptor associated protein TDP2. Interacts (via C-terminus) with EIF2AK2/PKR (via the kinase catalytic domain). Ubiquitinated at Lys-318 by the SCF(FBXL2) complex, leading to its degradation by the proteasome.

The protein resides in the cytoplasm. It localises to the cytosol. In terms of biological role, adapter protein and signal transducer that links members of the tumor necrosis factor receptor family to different signaling pathways by association with the receptor cytoplasmic domain and kinases. Mediates activation of NF-kappa-B and probably JNK. Seems to be involved in apoptosis. Plays a role in mediating activation of NF-kappa-B by EIF2AK2/PKR. The sequence is that of TNF receptor-associated factor 5 (Traf5) from Mus musculus (Mouse).